The sequence spans 510 residues: MPGLGRRAQWLCWWWGLLCSCGPPPLRPPLPVAAAAAGGQLLGAGGSPVRAEQPPPQSSSSGFLYRRLKTHEKREMQKEILSVLGLPHRPRPLHGLQQPQPPVLPPQQQQQQQQQQTAREEPPPGRLKSAPLFMLDLYNALSNDDEEDGASEGVGQEPGSHGGASSSQLRQPSPGAAHSLNRKSLLAPGPGGGASPLTSAQDSAFLNDADMVMSFVNLVEYDKEFSPHQRHHKEFKFNLSQIPEGEAVTAAEFRVYKDCVVGSFKNQTFLISIYQVLQEHQHRDSDLFLLDTRVVWASEEGWLEFDITATSNLWVVTPQHNMGLQLSVVTRDGLHVNPRAAGLVGRDGPYDKQPFMVAFFKVSEVHVRTTRSASSRRRQQSRNRSTQSQDVSRGSGSSDYNGSELKTACKKHELYVSFQDLGWQDWIIAPKGYAANYCDGECSFPLNAHMNATNHAIVQTLVHLMNPEYVPKPCCAPTKLNAISVLYFDDNSNVILKKYRNMVVRACGCH.

Residues 1 to 20 (MPGLGRRAQWLCWWWGLLCS) form the signal peptide. Positions 21-371 (CGPPPLRPPL…VSEVHVRTTR (351 aa)) are excised as a propeptide. Disordered stretches follow at residues 87-129 (PHRP…RLKS) and 143-199 (NDDE…PLTS). The segment covering 106 to 116 (PQQQQQQQQQQ) has biased composition (low complexity). Asparagine 238, asparagine 266, asparagine 383, asparagine 401, and asparagine 451 each carry an N-linked (GlcNAc...) asparagine glycan. The segment at 370 to 402 (TRSASSRRRQQSRNRSTQSQDVSRGSGSSDYNG) is disordered. Polar residues predominate over residues 390–401 (DVSRGSGSSDYN). Intrachain disulfides connect cysteine 409/cysteine 475, cysteine 438/cysteine 507, and cysteine 442/cysteine 509.

Belongs to the TGF-beta family. Interacts with SOSTDC1. Interacts (when glycosylated) with type I receptor ACVR1; the interaction may induce HAMP expression. Interacts with type II receptor ACVR2B. Interacts with Hemojuvelin/HJV. Interacts with ERFE; the interaction inhibits BMP-induced transcription of HAMP. Interacts with BMPR1A/ALK3. Forms heterodimers with BMP2 in vitro; the heterodimer then binds to its receptor BMPR1A /ALK3 and may induce HAMP expression. Expressed in the lung. Low levels seen in the kidney.

It localises to the secreted. In terms of biological role, growth factor of the TGF-beta superfamily that plays essential roles in many developmental processes including cartilage and bone formation. Also plays an important role in the regulation of HAMP/hepcidin expression and iron metabolism by acting as a ligand for hemojuvelin/HJV. Also acts to promote expression of HAMP, potentially via the interaction with its receptor BMPR1A/ALK3. Initiates the canonical BMP signaling cascade by associating with type I receptor ACVR1 and type II receptor ACVR2B. In turn, ACVR1 propagates signal by phosphorylating SMAD1/5/8 that travel to the nucleus and act as activators and repressors of transcription of target. Can also signal through non-canonical pathway such as TAZ-Hippo signaling cascade to modulate VEGF signaling by regulating VEGFR2 expression. In Mus musculus (Mouse), this protein is Bone morphogenetic protein 6 (Bmp6).